Here is a 398-residue protein sequence, read N- to C-terminus: L-talarate/galactarate dehydratase (398 aa).

Substrate-binding positions include 46 to 48 (DAK), 82 to 83 (KR), and Lys195. Residue Lys197 is the Proton acceptor of the active site. A Mg(2+)-binding site is contributed by Asp226. Asn228 is a binding site for substrate. Residues Glu252 and Glu278 each contribute to the Mg(2+) site. His328 serves as the catalytic Proton donor/acceptor. Glu348 contributes to the substrate binding site.

This sequence belongs to the mandelate racemase/muconate lactonizing enzyme family. In terms of assembly, homooctamer; tetramer of dimers. Mg(2+) serves as cofactor.

The catalysed reaction is L-altrarate = 5-dehydro-4-deoxy-D-glucarate + H2O. It carries out the reaction galactarate = 5-dehydro-4-deoxy-D-glucarate + H2O. It catalyses the reaction L-altrarate = galactarate. Competitively inhibited by tartronate. In terms of biological role, catalyzes the efficient dehydration of both L-talarate (also called L-altrarate) and galactarate to 5-keto-4-deoxy-D-glucarate (5-KDG). Also catalyzes the epimerization of L-talarate to galactarate; epimerization occurs in competition with dehydration. Is required for the utilization of L-talarate as a carbon source. Also functions in galactarate utilization. Is not active on other acid sugars. In Salmonella typhimurium (strain LT2 / SGSC1412 / ATCC 700720), this protein is L-talarate/galactarate dehydratase.